The following is a 102-amino-acid chain: Salivary thrombin inhibitor anophelin (102 aa).

A signal peptide spans 1-21 (MATKLIVIAFLCAALIAVVQS). Residues 25-102 (YAQGEEPTYD…SDSSSESTEH (78 aa)) form a disordered region. The segment covering 59–69 (SQLTEYANTAQ) has biased composition (polar residues). Residues 70–73 (DPGR) form a blocks active site cleft of host thrombin in a reverse direction compared to substrates region. Polar residues predominate over residues 80-90 (QANSNNGDQLP). Over residues 91–102 (SQSDSSSESTEH) the composition is skewed to low complexity.

Belongs to the anophelin family. In terms of assembly, interacts with human F2 (thrombin); the interaction results in thrombin inhibition.

Its subcellular location is the secreted. Salivary protein with anticoagulant activity that inhibits host thrombin (F2). The polypeptide is Salivary thrombin inhibitor anophelin (Anopheles funestus (African malaria mosquito)).